The primary structure comprises 259 residues: Imidazole glycerol phosphate synthase subunit HisF (259 aa).

Catalysis depends on residues Asp11 and Asp130.

Belongs to the HisA/HisF family. As to quaternary structure, heterodimer of HisH and HisF.

It localises to the cytoplasm. It carries out the reaction 5-[(5-phospho-1-deoxy-D-ribulos-1-ylimino)methylamino]-1-(5-phospho-beta-D-ribosyl)imidazole-4-carboxamide + L-glutamine = D-erythro-1-(imidazol-4-yl)glycerol 3-phosphate + 5-amino-1-(5-phospho-beta-D-ribosyl)imidazole-4-carboxamide + L-glutamate + H(+). It functions in the pathway amino-acid biosynthesis; L-histidine biosynthesis; L-histidine from 5-phospho-alpha-D-ribose 1-diphosphate: step 5/9. In terms of biological role, IGPS catalyzes the conversion of PRFAR and glutamine to IGP, AICAR and glutamate. The HisF subunit catalyzes the cyclization activity that produces IGP and AICAR from PRFAR using the ammonia provided by the HisH subunit. This chain is Imidazole glycerol phosphate synthase subunit HisF, found in Lactococcus lactis subsp. cremoris (strain MG1363).